Reading from the N-terminus, the 59-residue chain is UPF0291 protein CPR_1073 (59 aa).

A disordered region spans residues 1-30; the sequence is MNIDELTKRINELHKKHKEEGLSEDEHKER.

Belongs to the UPF0291 family.

Its subcellular location is the cytoplasm. The protein is UPF0291 protein CPR_1073 of Clostridium perfringens (strain SM101 / Type A).